We begin with the raw amino-acid sequence, 589 residues long: MDIVATTQKELYGWYAYAWAAEPFMVVAVATYIPQLLQSYARQNAVLADDHSQPCDSPPVPFPGDPGVPTDPGIPPNNSLSSSVPWFLRANEIQLLESPDTVHTMKDHKAKPTQPTCVIKFFGIYIDTASFPLYTFSLSVLLQVVVVISMSGAADRGRFRKQLLLFFGIAGALTTGLFVFITPKRYYLGSFLAIVSNAAFGAATVCGNAYLPVLAAGMKDGTTSEEPSEPSTPSDTSKPASRSENTPLLSASGVDYETGESSNTAEIVKIDHRANVSARISGTGVALGYLAGFIVQIISIYLVITTGSTTWSLRLALLIVGVWWLIFQIPVLMWLKPRPGPPLPIKTDPQNHPWTATLDRVTNGGWSYVTYGWKTLLVTFKEARQMKDVALFLVGWFLVSDGITTINSTAVLFAQGELRMSPANLAVMGMLVVISGISGAKLTPLIGGTRASPIKSIVVVVSLAAAVPAYGILGFFFTNIGLKNPWELYVLAVWYGFALGGLNTVCRSTFSMLIPRGKEAVFFSLFSVTDKGSSVLGPLLVGLIVDKTHNLRHAFYLLLVLLITPIGLFLMIDMERGRKEAEYLETVEE.

Residues 13–33 traverse the membrane as a helical segment; sequence GWYAYAWAAEPFMVVAVATYI. Residues 48 to 73 form a disordered region; the sequence is ADDHSQPCDSPPVPFPGDPGVPTDPG. Over residues 56-66 the composition is skewed to pro residues; sequence DSPPVPFPGDP. N77 is a glycosylation site (N-linked (GlcNAc...) asparagine). Transmembrane regions (helical) follow at residues 128–148, 163–183, and 187–207; these read TASF…VVVI, LLLF…FITP, and YLGS…TVCG. The disordered stretch occupies residues 221-257; that stretch reads GTTSEEPSEPSTPSDTSKPASRSENTPLLSASGVDYE. Polar residues predominate over residues 235–249; that stretch reads DTSKPASRSENTPLL. N275 carries N-linked (GlcNAc...) asparagine glycosylation. A run of 8 helical transmembrane segments spans residues 284-304, 315-335, 389-409, 426-446, 457-477, 486-506, 525-545, and 554-574; these read GVAL…YLVI, LALL…LMWL, VALF…INST, AVMG…TPLI, IVVV…GFFF, WELY…NTVC, LFSV…GLIV, and AFYL…MIDM.

This sequence belongs to the ATG22 family.

It is found in the vacuole membrane. Its function is as follows. Vacuolar effluxer which mediate the efflux of amino acids resulting from autophagic degradation. The release of autophagic amino acids allows the maintenance of protein synthesis and viability during nitrogen starvation. The chain is Autophagy-related protein 22 (ATG22) from Yarrowia lipolytica (strain CLIB 122 / E 150) (Yeast).